Reading from the N-terminus, the 85-residue chain is Small ribosomal subunit protein uS17 (85 aa).

This sequence belongs to the universal ribosomal protein uS17 family. As to quaternary structure, part of the 30S ribosomal subunit.

Functionally, one of the primary rRNA binding proteins, it binds specifically to the 5'-end of 16S ribosomal RNA. The chain is Small ribosomal subunit protein uS17 from Desulforapulum autotrophicum (strain ATCC 43914 / DSM 3382 / VKM B-1955 / HRM2) (Desulfobacterium autotrophicum).